Consider the following 378-residue polypeptide: Erythronate-4-phosphate dehydrogenase (378 aa).

Residues serine 45 and threonine 66 each contribute to the substrate site. 2 residues coordinate NAD(+): aspartate 146 and threonine 175. Arginine 208 is a catalytic residue. Residue aspartate 232 coordinates NAD(+). Residue glutamate 237 is part of the active site. Histidine 254 functions as the Proton donor in the catalytic mechanism. Glycine 257 provides a ligand contact to NAD(+). Tyrosine 258 contributes to the substrate binding site.

This sequence belongs to the D-isomer specific 2-hydroxyacid dehydrogenase family. PdxB subfamily. As to quaternary structure, homodimer.

The protein resides in the cytoplasm. It carries out the reaction 4-phospho-D-erythronate + NAD(+) = (R)-3-hydroxy-2-oxo-4-phosphooxybutanoate + NADH + H(+). Its pathway is cofactor biosynthesis; pyridoxine 5'-phosphate biosynthesis; pyridoxine 5'-phosphate from D-erythrose 4-phosphate: step 2/5. Its function is as follows. Catalyzes the oxidation of erythronate-4-phosphate to 3-hydroxy-2-oxo-4-phosphonooxybutanoate. This Escherichia coli O6:K15:H31 (strain 536 / UPEC) protein is Erythronate-4-phosphate dehydrogenase.